The following is a 1064-amino-acid chain: MYNNNGFHEETNIDESQFTVEKVETVLKSLYFPQNNDYSALPQIQQWLIQFQKSFSSWSIAPLLLMSNIKEIQYFGASTIENKIKNNWLSLSQDMKKEFLDNLLLFLKTQITKCSTVVITRLCLAVSVIACHSTTDLWANPILDVLQLSFQDINNLDCFNPNLVNLTLELLTIFPEELTNADYITQEKRNKVGLQFNKHNSKVFEILCKIMSLPQNQQTLIFMKSSLKCFKSWILFDCSPREYLIDSDLILKCFEAVSNNPKLVEDFLMVLDEMFTFMGGKIFRSYTSAFSLVLSRILMIFPSFYILALQEENQIFNQIFLLFSHIAENHIKTLLKNPELSNNFFKALIQMALKGDFETCELLSPVITEIAALHELHSTSSTTEATTTTIATTTTPTTTSDCDISGWYQYLGEMVEVFRLKSMYPLDKDISDLYEEDAEKFFAFRVIAGDSVLEVYNILEGKILQQLLNSLWSDIQSFPTTKCWQSIEATIYLLSCLSESITEDTEFVPQLFSILGQLPIQSTPLIKSTMTLAGNYSNLIDKSTIFLEKIVKDFFPAFENPDLKSVASQSFLSISKNSKCASILSNSITQLISLCAPILSNNNKILDDPSNFNILEALLYIISTLPSDSQVLNYSTQLLYPFILFIKNYYTNQLQQQQQQQQQQQTELRLLLSSINLLTKFCKIYDDEQVNEYGTTQQENNNNNNNNNNNNNNNNNNNNNNNNNNIKPVFEIINNIIPIYGELLSLNTLESSIIEAISIFYKKAIMINNNHQNITNIPEINRQLTLAFLKHKPLSLVLSTLSISIVNLPKEQHLDFLADSLSSISSKMIQIWSEKSNQNNKKNNKKINNNIDIDNDNENNNNNNQIQFENNELNEFKNLKISIYPDITKEYFTMITQYIRYNAVSIPQGVISHLFSIILVNITKIHDKVTARACFSFMALIITKSKEMKSQIKWEPLLNEINGWLSIHGELFIKQILYSAGGGIPRSVVQFISEVIASLVSSYPDVFRISALKCLSVDGFPSSNITKEQKEKFLNSLMLYRSKKLPLKIVTDFSLVSLGIATNQ.

The Importin N-terminal domain occupies 40–109 (ALPQIQQWLI…LDNLLLFLKT (70 aa)). Disordered stretches follow at residues 695–722 (TTQQENNNNNNNNNNNNNNNNNNNNNNN) and 839–860 (NNKKNNKKINNNIDIDNDNENN). A compositionally biased stretch (low complexity) spans 700–722 (NNNNNNNNNNNNNNNNNNNNNNN).

This sequence belongs to the importin beta family. As to quaternary structure, forms a complex with an importin alpha subunit.

It is found in the cytoplasm. The protein resides in the nucleus envelope. Required for nuclear protein import and mediates docking of import substrate to distinct nucleoporins. The polypeptide is Importin-13 homolog A (ipo13A) (Dictyostelium discoideum (Social amoeba)).